Here is a 426-residue protein sequence, read N- to C-terminus: Vacuole membrane protein hfl11 (426 aa).

Helical transmembrane passes span 39–59, 73–93, 133–153, 172–192, and 223–243; these read SVVR…LSVY, IYEA…LGGE, GILQ…LTKV, IGLV…TFWV, and VLSI…YSLL. At serine 364 the chain carries Phosphoserine. Residues 386-409 are ATG8-interacting region; sequence LQFEIDDEMEPLYNQAKQMRYGDY.

This sequence belongs to the TMEM184 family. In terms of assembly, interacts with atg8.

It is found in the vacuole membrane. Its function is as follows. Vacuole membrane protein that recruits ATG8 to facilitate the degradation of vacuolar integral membrane proteins during early-stationary vacuole turnover (EVT) when cells enter stationary phase. This Schizosaccharomyces pombe (strain 972 / ATCC 24843) (Fission yeast) protein is Vacuole membrane protein hfl11.